Here is a 226-residue protein sequence, read N- to C-terminus: Late expression factor 7 (226 aa).

In terms of domain architecture, F-box spans 9-58 (RAKRIRLPLEIIDTILQYLDPILHAKVVGLTTRVKCRLLRDNNVEDYLKL).

As to quaternary structure, interacts with host S-phase kinase-associated protein 1/SKP1.

It localises to the host nucleus. The protein operates within protein degradation; proteasomal ubiquitin-dependent pathway. Functionally, F-box protein that manipulates the host DNA damage response (DRR) in order to promote viral multiplication. Acts as a substrate recognition component of SKP1/Cullin/F-box (SCF) complexes for targeted protein polyubiquitination. The polypeptide is Late expression factor 7 (LEF-7) (Lepidoptera (butterflies and moths)).